Reading from the N-terminus, the 284-residue chain is Lipoyl synthase (284 aa).

Positions 38, 43, 49, 64, 68, 71, and 277 each coordinate [4Fe-4S] cluster. Residues 50–266 (WSRGTATFLL…RDEALGMGFS (217 aa)) form the Radical SAM core domain.

The protein belongs to the radical SAM superfamily. Lipoyl synthase family. Requires [4Fe-4S] cluster as cofactor.

The protein localises to the cytoplasm. The catalysed reaction is [[Fe-S] cluster scaffold protein carrying a second [4Fe-4S](2+) cluster] + N(6)-octanoyl-L-lysyl-[protein] + 2 oxidized [2Fe-2S]-[ferredoxin] + 2 S-adenosyl-L-methionine + 4 H(+) = [[Fe-S] cluster scaffold protein] + N(6)-[(R)-dihydrolipoyl]-L-lysyl-[protein] + 4 Fe(3+) + 2 hydrogen sulfide + 2 5'-deoxyadenosine + 2 L-methionine + 2 reduced [2Fe-2S]-[ferredoxin]. It functions in the pathway protein modification; protein lipoylation via endogenous pathway; protein N(6)-(lipoyl)lysine from octanoyl-[acyl-carrier-protein]: step 2/2. Functionally, catalyzes the radical-mediated insertion of two sulfur atoms into the C-6 and C-8 positions of the octanoyl moiety bound to the lipoyl domains of lipoate-dependent enzymes, thereby converting the octanoylated domains into lipoylated derivatives. The polypeptide is Lipoyl synthase (Chlorobium phaeovibrioides (strain DSM 265 / 1930) (Prosthecochloris vibrioformis (strain DSM 265))).